A 420-amino-acid chain; its full sequence is MHDLKALRADPAAFDAALARRGLSPVGQQLVSDDEGRRAALAALQEAQGARKALAKEIGLLKRQKLDTAEIEAKAVALRDQIAGLEERANTIQTRIDDVLKSLPNCLDASVPDGKGEDENVVVHVRGEKREFAFEAKQHFELGEALGLMDFPTAAKLSGTRFVVLRGALARLERALGQFMLDTHTTEFGYSETSVPLLVNDDAMYGTDKLPKFAEDSFRTEDGRWLIPTAEVPLTASVMGEILPADALPIRMTALSQCFRSEAGSAGRDVRGMLRQHQFTKCELVSVVKPEDSDAEHERMTQAAETVLERLGITFRRMLLCAGDTGFGAAKTFDLEAWLPGQKAWREISSCSNTRDFQARRMNARYRAENGPAFVNTLNGSGLAVGRTMIAVMETYQNEDGSIDIPEVLRPYMGGLNRIG.

229 to 231 contributes to the L-serine binding site; it reads TAE. 260 to 262 is an ATP binding site; sequence RSE. Position 283 (Glu-283) interacts with L-serine. 347–350 contributes to the ATP binding site; sequence EISS. Ser-381 lines the L-serine pocket.

Belongs to the class-II aminoacyl-tRNA synthetase family. Type-1 seryl-tRNA synthetase subfamily. In terms of assembly, homodimer. The tRNA molecule binds across the dimer.

It localises to the cytoplasm. It carries out the reaction tRNA(Ser) + L-serine + ATP = L-seryl-tRNA(Ser) + AMP + diphosphate + H(+). The catalysed reaction is tRNA(Sec) + L-serine + ATP = L-seryl-tRNA(Sec) + AMP + diphosphate + H(+). The protein operates within aminoacyl-tRNA biosynthesis; selenocysteinyl-tRNA(Sec) biosynthesis; L-seryl-tRNA(Sec) from L-serine and tRNA(Sec): step 1/1. Catalyzes the attachment of serine to tRNA(Ser). Is also able to aminoacylate tRNA(Sec) with serine, to form the misacylated tRNA L-seryl-tRNA(Sec), which will be further converted into selenocysteinyl-tRNA(Sec). In Gluconobacter oxydans (strain 621H) (Gluconobacter suboxydans), this protein is Serine--tRNA ligase.